The chain runs to 218 residues: Pyridoxine/pyridoxamine 5'-phosphate oxidase (218 aa).

Substrate-binding positions include 14 to 17 (RREY) and Lys72. FMN-binding positions include 67–72 (RIVLLK), 82–83 (YT), Arg88, Lys89, and Gln111. Residues Tyr129, Arg133, and Ser137 each coordinate substrate. FMN is bound by residues 146–147 (QS) and Trp191. 197–199 (RLH) is a substrate binding site. FMN is bound at residue Arg201.

The protein belongs to the pyridoxamine 5'-phosphate oxidase family. In terms of assembly, homodimer. It depends on FMN as a cofactor.

It catalyses the reaction pyridoxamine 5'-phosphate + O2 + H2O = pyridoxal 5'-phosphate + H2O2 + NH4(+). It carries out the reaction pyridoxine 5'-phosphate + O2 = pyridoxal 5'-phosphate + H2O2. The protein operates within cofactor metabolism; pyridoxal 5'-phosphate salvage; pyridoxal 5'-phosphate from pyridoxamine 5'-phosphate: step 1/1. It participates in cofactor metabolism; pyridoxal 5'-phosphate salvage; pyridoxal 5'-phosphate from pyridoxine 5'-phosphate: step 1/1. Catalyzes the oxidation of either pyridoxine 5'-phosphate (PNP) or pyridoxamine 5'-phosphate (PMP) into pyridoxal 5'-phosphate (PLP). The sequence is that of Pyridoxine/pyridoxamine 5'-phosphate oxidase from Salmonella typhi.